A 300-amino-acid polypeptide reads, in one-letter code: 4-hydroxy-tetrahydrodipicolinate synthase (300 aa).

T57 provides a ligand contact to pyruvate. The active-site Proton donor/acceptor is Y145. K173 functions as the Schiff-base intermediate with substrate in the catalytic mechanism. I213 contributes to the pyruvate binding site.

It belongs to the DapA family. Homotetramer; dimer of dimers.

It localises to the cytoplasm. The enzyme catalyses L-aspartate 4-semialdehyde + pyruvate = (2S,4S)-4-hydroxy-2,3,4,5-tetrahydrodipicolinate + H2O + H(+). It functions in the pathway amino-acid biosynthesis; L-lysine biosynthesis via DAP pathway; (S)-tetrahydrodipicolinate from L-aspartate: step 3/4. Catalyzes the condensation of (S)-aspartate-beta-semialdehyde [(S)-ASA] and pyruvate to 4-hydroxy-tetrahydrodipicolinate (HTPA). The polypeptide is 4-hydroxy-tetrahydrodipicolinate synthase (Corynebacterium urealyticum (strain ATCC 43042 / DSM 7109)).